A 227-amino-acid polypeptide reads, in one-letter code: Lipoprotein-releasing system ATP-binding protein LolD (227 aa).

The region spanning 6 to 227 (LVLDDIQKSY…RLDEGVLVSA (222 aa)) is the ABC transporter domain. Residue 43–50 (APSGAGKS) participates in ATP binding.

It belongs to the ABC transporter superfamily. Lipoprotein translocase (TC 3.A.1.125) family. As to quaternary structure, the complex is composed of two ATP-binding proteins (LolD) and two transmembrane proteins (LolC and LolE).

Its subcellular location is the cell inner membrane. Functionally, part of the ABC transporter complex LolCDE involved in the translocation of mature outer membrane-directed lipoproteins, from the inner membrane to the periplasmic chaperone, LolA. Responsible for the formation of the LolA-lipoprotein complex in an ATP-dependent manner. This chain is Lipoprotein-releasing system ATP-binding protein LolD, found in Jannaschia sp. (strain CCS1).